The chain runs to 141 residues: Large ribosomal subunit protein uL11 (141 aa).

This sequence belongs to the universal ribosomal protein uL11 family. In terms of assembly, part of the ribosomal stalk of the 50S ribosomal subunit. Interacts with L10 and the large rRNA to form the base of the stalk. L10 forms an elongated spine to which L12 dimers bind in a sequential fashion forming a multimeric L10(L12)X complex. Post-translationally, one or more lysine residues are methylated.

In terms of biological role, forms part of the ribosomal stalk which helps the ribosome interact with GTP-bound translation factors. This Cyanothece sp. (strain PCC 7425 / ATCC 29141) protein is Large ribosomal subunit protein uL11.